Consider the following 856-residue polypeptide: Serine/threonine-protein phosphatase 6 regulatory subunit 1 (856 aa).

Residues 10–403 form an interaction with PPP6C region; sequence SSHLDTLLEK…VFNNFLHAQV (394 aa). A Phosphoserine modification is found at S232. T524 carries the phosphothreonine modification. S529, S530, and S531 each carry phosphoserine. A compositionally biased stretch (acidic residues) spans 621 to 630; it reads DDEEEEEEEG. Disordered regions lie at residues 621 to 770 and 792 to 856; these read DDEE…KVAE and RSAP…SGSQ. Phosphoserine occurs at positions 633 and 636. A compositionally biased stretch (polar residues) spans 644–656; it reads QGSQPVRASQASQ. Residues 667–683 show a composition bias toward acidic residues; sequence DSEEEDEEEDEEEDEGA. A phosphoserine mark is found at S698 and S739. Residues 794-809 are compositionally biased toward polar residues; that stretch reads APSSLDSATRDPSTSV. Position 826 is a phosphoserine (S826). The segment covering 842-856 has biased composition (low complexity); the sequence is PNGSTPGGPISSGSQ.

This sequence belongs to the SAPS family. In terms of assembly, protein phosphatase 6 (PP6) holoenzyme is proposed to be a heterotrimeric complex formed of the catalytic subunit, a SAPS domain-containing subunit (PP6R) and an ankyrin repeat-domain containing regulatory subunit (ARS). Interacts with PPP6C and NFKBIE. Interacts with ANKRD28, ANKRD44 and ANKRD52. As to expression, ubiquitous with highest expression in lung, spleen and bladder.

It localises to the cytoplasm. Functionally, regulatory subunit of protein phosphatase 6 (PP6). May function as a scaffolding PP6 subunit. Involved in the PP6-mediated dephosphorylation of NFKBIE opposing its degradation in response to TNF-alpha. In Mus musculus (Mouse), this protein is Serine/threonine-protein phosphatase 6 regulatory subunit 1 (Ppp6r1).